A 286-amino-acid polypeptide reads, in one-letter code: Glycine--tRNA ligase alpha subunit (286 aa).

Belongs to the class-II aminoacyl-tRNA synthetase family. In terms of assembly, tetramer of two alpha and two beta subunits.

It localises to the cytoplasm. The catalysed reaction is tRNA(Gly) + glycine + ATP = glycyl-tRNA(Gly) + AMP + diphosphate. The polypeptide is Glycine--tRNA ligase alpha subunit (Campylobacter concisus (strain 13826)).